The sequence spans 261 residues: NAD-capped RNA hydrolase NudC (261 aa).

Arg69 provides a ligand contact to substrate. Residues Cys98 and Cys101 each coordinate Zn(2+). Residue Glu111 coordinates substrate. Residues Cys116 and Cys119 each contribute to the Zn(2+) site. Substrate is bound at residue Tyr124. The Nudix hydrolase domain occupies 125–248 (PQIAPCIIVA…TVARRLIEDT (124 aa)). Residues Ala158, Glu174, and Glu178 each contribute to the a divalent metal cation site. The short motif at 159 to 180 (GFVEVGETLEQTVAREVMEESS) is the Nudix box element. Position 192–199 (192–199 (QPWPFPQS)) interacts with substrate. Glu219 provides a ligand contact to a divalent metal cation. Ala241 provides a ligand contact to substrate.

Belongs to the Nudix hydrolase family. NudC subfamily. As to quaternary structure, homodimer. Mg(2+) serves as cofactor. Mn(2+) is required as a cofactor. The cofactor is Zn(2+).

The catalysed reaction is a 5'-end NAD(+)-phospho-ribonucleoside in mRNA + H2O = a 5'-end phospho-adenosine-phospho-ribonucleoside in mRNA + beta-nicotinamide D-ribonucleotide + 2 H(+). The enzyme catalyses NAD(+) + H2O = beta-nicotinamide D-ribonucleotide + AMP + 2 H(+). It carries out the reaction NADH + H2O = reduced beta-nicotinamide D-ribonucleotide + AMP + 2 H(+). Functionally, mRNA decapping enzyme that specifically removes the nicotinamide adenine dinucleotide (NAD) cap from a subset of mRNAs by hydrolyzing the diphosphate linkage to produce nicotinamide mononucleotide (NMN) and 5' monophosphate mRNA. The NAD-cap is present at the 5'-end of some mRNAs and stabilizes RNA against 5'-processing. Has preference for mRNAs with a 5'-end purine. Catalyzes the hydrolysis of a broad range of dinucleotide pyrophosphates. The polypeptide is NAD-capped RNA hydrolase NudC (Erwinia tasmaniensis (strain DSM 17950 / CFBP 7177 / CIP 109463 / NCPPB 4357 / Et1/99)).